Consider the following 198-residue polypeptide: MQAEIKADIIVEAMEVLVNHILYVRGIYPSHIFKMKRMYNSPIYVSIFPPLNNYLAGVLKSAQELLRRRELQCLELIVYQKENEKLESYKMQLETQRSGLPAEDHLMEFEQNMRSVIYKISQRLNQAPKLPAGSCQFKVHLHTTQEAFIRFSHDSQYQEFPWLQTQKTESQATGRTVYLLPLARVDDLGLKMDVLIVN.

One can recognise an HORMA domain in the interval 4-196; sequence EIKADIIVEA…DLGLKMDVLI (193 aa).

This sequence belongs to the MAD2 family. In terms of assembly, accessory subunit of the zeta DNA polymerase complex, which consists of the catalytic component PolZ1/DNApol-zeta and PolZ2/Rev7. Interacts with the apurinic/apyrimidinic (AP) endonuclease Rrp1 (via the N-terminus).

Functionally, as the accessory component of the DNA polymerase zeta complex, involved in translesion DNA synthesis (TLS) and various DNA repair mechanisms. Promotes the apurinic/apyrimidinic (AP) endonuclease activity of Rrp1 and is therefore likely to be involved in the base excision repair (BER) pathway responsible for repair of DNA lesions. It does not appear to influence the synthesis activity of the catalytic component Dmpol-zeta. This Drosophila melanogaster (Fruit fly) protein is DNA polymerase zeta subunit 2.